We begin with the raw amino-acid sequence, 245 residues long: Pyridoxine 5'-phosphate synthase (245 aa).

Residue Asn7 coordinates 3-amino-2-oxopropyl phosphate. 9–10 contributes to the 1-deoxy-D-xylulose 5-phosphate binding site; the sequence is DH. 3-amino-2-oxopropyl phosphate is bound at residue Arg18. Residue His43 is the Proton acceptor of the active site. 1-deoxy-D-xylulose 5-phosphate contacts are provided by Arg45 and His50. Glu70 (proton acceptor) is an active-site residue. Position 100 (Thr100) interacts with 1-deoxy-D-xylulose 5-phosphate. The Proton donor role is filled by His190. 3-amino-2-oxopropyl phosphate is bound by residues Gly191 and 212-213; that span reads GH.

Belongs to the PNP synthase family. Homooctamer; tetramer of dimers.

It is found in the cytoplasm. It carries out the reaction 3-amino-2-oxopropyl phosphate + 1-deoxy-D-xylulose 5-phosphate = pyridoxine 5'-phosphate + phosphate + 2 H2O + H(+). It functions in the pathway cofactor biosynthesis; pyridoxine 5'-phosphate biosynthesis; pyridoxine 5'-phosphate from D-erythrose 4-phosphate: step 5/5. Functionally, catalyzes the complicated ring closure reaction between the two acyclic compounds 1-deoxy-D-xylulose-5-phosphate (DXP) and 3-amino-2-oxopropyl phosphate (1-amino-acetone-3-phosphate or AAP) to form pyridoxine 5'-phosphate (PNP) and inorganic phosphate. This is Pyridoxine 5'-phosphate synthase from Prochlorococcus marinus (strain NATL2A).